The primary structure comprises 427 residues: UPF0229 protein YeaH (427 aa).

A compositionally biased stretch (basic and acidic residues) spans 79 to 90; it reads NDHFVQNDRIER. The disordered stretch occupies residues 79–110; it reads NDHFVQNDRIERPQGGGGGSGSGQGQASQDGE. The span at 92–102 shows a compositional bias: gly residues; it reads QGGGGGSGSGQ.

Belongs to the UPF0229 family.

This is UPF0229 protein YeaH from Shigella boydii serotype 18 (strain CDC 3083-94 / BS512).